A 60-amino-acid chain; its full sequence is MDHRLLEIVACPVCTGKLYFNKENQELVCKVDGLAYPLRDGIPVLLENEARALSLDEKHA.

This sequence belongs to the UPF0434 family.

The sequence is that of UPF0434 protein Spro_1718 from Serratia proteamaculans (strain 568).